Here is a 231-residue protein sequence, read N- to C-terminus: Adenylate kinase (231 aa).

Residue 12–17 (GAGKGT) coordinates ATP. The segment at 32–61 (STGDMLRAAVKAKTPLGLEVKKIMESGGLV) is NMP. AMP is bound by residues Thr33, Arg38, 59-61 (GLV), 87-90 (GFPR), and Gln94. The segment at 124–161 (GRLIHPASGRTYHRRYNPPKVADKDDVTGEPLIQRADD) is LID. Residues Arg125 and 134–135 (TY) each bind ATP. Residues Arg158 and Arg169 each coordinate AMP. Gly205 contributes to the ATP binding site.

This sequence belongs to the adenylate kinase family. As to quaternary structure, monomer.

The protein resides in the cytoplasm. The enzyme catalyses AMP + ATP = 2 ADP. Its pathway is purine metabolism; AMP biosynthesis via salvage pathway; AMP from ADP: step 1/1. Its function is as follows. Catalyzes the reversible transfer of the terminal phosphate group between ATP and AMP. Plays an important role in cellular energy homeostasis and in adenine nucleotide metabolism. The sequence is that of Adenylate kinase from Coxiella burnetii (strain CbuK_Q154) (Coxiella burnetii (strain Q154)).